The sequence spans 135 residues: MSKEFSRTQRVSQQLQKELAMILQREVRDSRLGMVTISDVEVSRDLAYAKVFVTFLCVGEQTPESCLAALREHEVHIRMMLGKRIRLRLTPEIRFYYDNTLVEGMRMSNLVSEVVNEDKRKQQDSGREEDQAGEE.

A disordered region spans residues Val-115–Glu-135. A compositionally biased stretch (basic and acidic residues) spans Asn-116–Glu-135.

This sequence belongs to the RbfA family. Monomer. Binds 30S ribosomal subunits, but not 50S ribosomal subunits or 70S ribosomes.

The protein resides in the cytoplasm. In terms of biological role, one of several proteins that assist in the late maturation steps of the functional core of the 30S ribosomal subunit. Associates with free 30S ribosomal subunits (but not with 30S subunits that are part of 70S ribosomes or polysomes). Required for efficient processing of 16S rRNA. May interact with the 5'-terminal helix region of 16S rRNA. This is Ribosome-binding factor A from Vibrio campbellii (strain ATCC BAA-1116).